The primary structure comprises 558 residues: Glucose-6-phosphate isomerase (558 aa).

The residue at position 2 (alanine 2) is an N-acetylalanine. Lysine 12 carries the post-translational modification N6-acetyllysine. Lysine 34 carries the post-translational modification N6-(2-hydroxyisobutyryl)lysine. Serine 107 carries the phosphoserine modification. Threonine 109 is subject to Phosphothreonine. Lysine 142 bears the N6-acetyllysine mark. 159 to 160 (GS) is a D-glucose 6-phosphate binding site. Position 185 is a phosphoserine; by CK2 (serine 185). 210–215 (SKTFTT) is a D-glucose 6-phosphate binding site. At threonine 250 the chain carries Phosphothreonine. The D-glucose 6-phosphate site is built by glutamine 354, glutamate 358, and histidine 389. Glutamate 358 (proton donor) is an active-site residue. Histidine 389 is a catalytic residue. At lysine 454 the chain carries N6-acetyllysine; alternate. Lysine 454 is modified (N6-malonyllysine; alternate). Lysine 454 is subject to N6-succinyllysine; alternate. Residue serine 455 is modified to Phosphoserine. Lysine 519 is a binding site for D-glucose 6-phosphate. Lysine 519 is an active-site residue.

The protein belongs to the GPI family. In terms of assembly, homodimer; in the catalytically active form. Monomer in the secreted form. Post-translationally, phosphorylation at Ser-185 by CK2 has been shown to decrease enzymatic activity and may contribute to secretion by a non-classical secretory pathway. ISGylated.

It is found in the cytoplasm. It localises to the secreted. The catalysed reaction is alpha-D-glucose 6-phosphate = beta-D-fructose 6-phosphate. It participates in carbohydrate degradation; glycolysis; D-glyceraldehyde 3-phosphate and glycerone phosphate from D-glucose: step 2/4. In the cytoplasm, catalyzes the conversion of glucose-6-phosphate to fructose-6-phosphate, the second step in glycolysis, and the reverse reaction during gluconeogenesis. Besides it's role as a glycolytic enzyme, also acts as a secreted cytokine: acts as an angiogenic factor (AMF) that stimulates endothelial cell motility. Acts as a neurotrophic factor, neuroleukin, for spinal and sensory neurons. It is secreted by lectin-stimulated T-cells and induces immunoglobulin secretion. This is Glucose-6-phosphate isomerase from Macaca fascicularis (Crab-eating macaque).